Reading from the N-terminus, the 393-residue chain is Cyclic GMP-AMP synthase-like receptor 1 (393 aa).

Residues Glu89, Asp91, and Asp205 each coordinate Mg(2+). 89–91 (EFD) provides a ligand contact to ATP. Residues Asp205 and 251–258 (RASFYEAE) contribute to the GTP site. Residues 255–258 (YEAE), Lys276, and 289–293 (SYHIK) contribute to the ATP site.

This sequence belongs to the mab-21 family. The cofactor is Mg(2+). Mn(2+) serves as cofactor.

It carries out the reaction GTP + ATP = 3',2'-cGAMP + 2 diphosphate. The catalysed reaction is GTP + ATP = pppA(2'-5')pG + diphosphate. It catalyses the reaction pppA(2'-5')pG = 3',2'-cGAMP + diphosphate. With respect to regulation, the enzyme activity is specifically activated by double-stranded RNA (dsRNA). Recognizes long dsRNA (&gt;30 bp) with no preference for 5' RNA phosphorylation. Functionally, nucleotidyltransferase that catalyzes the formation of cyclic GMP-AMP (3',2'-cGAMP) from ATP and GTP and plays a key role in innate immunity. Synthesizes 3',2'-cGAMP in a two-step reaction through production of the linear intermediate pppA(2'-5')pG. Acts as a key sensor of double-stranded RNA (dsRNA), the presence of dsRNA in the cytoplasm being a danger signal that triggers the immune responses. Directly binds dsRNA longer than 35 bp, activating the nucleotidyltransferase activity, leading to synthesis of 3',2'-cGAMP, a second messenger that binds to and activates Sting, thereby triggering the antiviral immune response via activation of the NF-kappa-B transcription factor Rel (Relish). The chain is Cyclic GMP-AMP synthase-like receptor 1 from Drosophila simulans (Fruit fly).